The chain runs to 286 residues: 4-diphosphocytidyl-2-C-methyl-D-erythritol kinase (286 aa).

The active site involves lysine 12. Residue proline 96–alanine 106 participates in ATP binding. Residue aspartate 138 is part of the active site.

This sequence belongs to the GHMP kinase family. IspE subfamily.

It carries out the reaction 4-CDP-2-C-methyl-D-erythritol + ATP = 4-CDP-2-C-methyl-D-erythritol 2-phosphate + ADP + H(+). The protein operates within isoprenoid biosynthesis; isopentenyl diphosphate biosynthesis via DXP pathway; isopentenyl diphosphate from 1-deoxy-D-xylulose 5-phosphate: step 3/6. Functionally, catalyzes the phosphorylation of the position 2 hydroxy group of 4-diphosphocytidyl-2C-methyl-D-erythritol. The chain is 4-diphosphocytidyl-2-C-methyl-D-erythritol kinase from Nitratidesulfovibrio vulgaris (strain DP4) (Desulfovibrio vulgaris).